The sequence spans 172 residues: Putative B3 domain-containing protein At1g05615 (172 aa).

The TF-B3 DNA-binding region spans 69–169 (VDEGKIIDFE…NLAMVPLTPT (101 aa)).

The protein resides in the nucleus. The sequence is that of Putative B3 domain-containing protein At1g05615 from Arabidopsis thaliana (Mouse-ear cress).